Reading from the N-terminus, the 119-residue chain is MAGRGKLIAVIGDEDTVTGFLLGGIGELNKNRHPNFLVVEKDTTINEIEDTFRQFLNRDDIGIILINQYIAEMVRHALDAHQRSIPAVLEIPSKEHPYDAAKDSILRRAKGMFTAEDLR.

Belongs to the V-ATPase F subunit family. In terms of assembly, V-ATPase is a heteromultimeric enzyme made up of two complexes: the ATP-hydrolytic V1 complex and the proton translocation V0 complex. The V1 complex consists of three catalytic AB heterodimers that form a heterohexamer, three peripheral stalks each consisting of EG heterodimers, one central rotor including subunits D and F, and the regulatory subunits C and H. The proton translocation complex V0 consists of the proton transport subunit a, a ring of proteolipid subunits c9c'', rotary subunit d, subunits e and f, and the accessory subunits ATP6AP1/Ac45 and ATP6AP2/PRR.

The protein localises to the cytoplasmic vesicle. The protein resides in the secretory vesicle. It localises to the synaptic vesicle membrane. It is found in the clathrin-coated vesicle membrane. In terms of biological role, subunit of the V1 complex of vacuolar(H+)-ATPase (V-ATPase), a multisubunit enzyme composed of a peripheral complex (V1) that hydrolyzes ATP and a membrane integral complex (V0) that translocates protons. V-ATPase is responsible for acidifying and maintaining the pH of intracellular compartments and in some cell types, is targeted to the plasma membrane, where it is responsible for acidifying the extracellular environment. This is V-type proton ATPase subunit F (Atp6v1f) from Mus musculus (Mouse).